Reading from the N-terminus, the 687-residue chain is Glycine--tRNA ligase beta subunit (687 aa).

The protein belongs to the class-II aminoacyl-tRNA synthetase family. As to quaternary structure, tetramer of two alpha and two beta subunits.

Its subcellular location is the cytoplasm. It catalyses the reaction tRNA(Gly) + glycine + ATP = glycyl-tRNA(Gly) + AMP + diphosphate. The sequence is that of Glycine--tRNA ligase beta subunit from Neisseria meningitidis serogroup C (strain 053442).